The primary structure comprises 221 residues: Small ribosomal subunit protein uS3c (221 aa).

The region spanning 43-121 is the KH type-2 domain; that stretch reads IQNYIQKNMR…KLKIAITKIA (79 aa).

It belongs to the universal ribosomal protein uS3 family. As to quaternary structure, part of the 30S ribosomal subunit.

The protein localises to the plastid. It localises to the chloroplast. In Jasminum nudiflorum (Winter jasmine), this protein is Small ribosomal subunit protein uS3c (rps3).